Consider the following 487-residue polypeptide: Putative sugar kinase YoaC (487 aa).

This sequence belongs to the FGGY kinase family.

This is Putative sugar kinase YoaC (yoaC) from Bacillus subtilis (strain 168).